The primary structure comprises 64 residues: Bacteriocin glycocin F (64 aa).

The signal sequence occupies residues methionine 1–glycine 21. Cystine bridges form between cysteine 26/cysteine 49 and cysteine 33/cysteine 42. O-linked (GlcNAc) serine glycosylation is present at serine 39. Cysteine 64 carries an S-linked (GlcNAc) cysteine glycan.

The protein resides in the secreted. Its function is as follows. Has antibacterial activity against L.plantarum ATCC 8014. In purified form, the activity is bacteriostatic (IC(50)=2 nM) rather than bactericidal. In Lactiplantibacillus plantarum (Lactobacillus plantarum), this protein is Bacteriocin glycocin F.